Here is a 443-residue protein sequence, read N- to C-terminus: MSSQLPILTVSQLNRQVKGFLENEIGLVHVEGEISNLSKPSSGHYYFTLKDSTAQIRCAFFKNRHSSSLLRNFNDGQQIVASGKLSLYEARGEYQLIVEEIVEAGMGVLYQRFEELKIKLASEGLFNPERKKTLPRIPETIGIITSPTGAAIQDILSTLARRFPIARVIIYPSEVQGQTAPQQLVNALKLANAHKRCQVLILARGGGSIEDLWAFNDEYLARQIAISEIPVVSGIGHETDFTIADFVADYRAETPTAAATAVTPNCIELFNILDTAIYRLHDAIIRLIKGLQLKLNHLIDKIASPRQAISTYWQTLDYLERQLISAMTQFINLNINKVNIFSTQLQASNPKIQIERTKIQLQQLIMQLTQEIRIKVNQLKNQLSTNLSTLHAVSPLATLDRGYAIVSKNQRILFAAQQAQIGDTINIRLAKGSLACEVTQIKD.

It belongs to the XseA family. In terms of assembly, heterooligomer composed of large and small subunits.

Its subcellular location is the cytoplasm. It catalyses the reaction Exonucleolytic cleavage in either 5'- to 3'- or 3'- to 5'-direction to yield nucleoside 5'-phosphates.. Its function is as follows. Bidirectionally degrades single-stranded DNA into large acid-insoluble oligonucleotides, which are then degraded further into small acid-soluble oligonucleotides. This is Exodeoxyribonuclease 7 large subunit from Legionella pneumophila (strain Corby).